Consider the following 296-residue polypeptide: Porphobilinogen deaminase (296 aa).

S-(dipyrrolylmethanemethyl)cysteine is present on Cys232.

This sequence belongs to the HMBS family. As to quaternary structure, monomer. Dipyrromethane is required as a cofactor.

It catalyses the reaction 4 porphobilinogen + H2O = hydroxymethylbilane + 4 NH4(+). The protein operates within porphyrin-containing compound metabolism; protoporphyrin-IX biosynthesis; coproporphyrinogen-III from 5-aminolevulinate: step 2/4. Functionally, tetrapolymerization of the monopyrrole PBG into the hydroxymethylbilane pre-uroporphyrinogen in several discrete steps. This Corynebacterium aurimucosum (strain ATCC 700975 / DSM 44827 / CIP 107346 / CN-1) (Corynebacterium nigricans) protein is Porphobilinogen deaminase.